The primary structure comprises 185 residues: Ribosome-recycling factor (185 aa).

Lys-162 is modified (N6-acetyllysine).

Belongs to the RRF family.

The protein localises to the cytoplasm. Its function is as follows. Responsible for the release of ribosomes from messenger RNA at the termination of protein biosynthesis. May increase the efficiency of translation by recycling ribosomes from one round of translation to another. The protein is Ribosome-recycling factor of Shigella boydii serotype 18 (strain CDC 3083-94 / BS512).